Consider the following 272-residue polypeptide: uncharacterized protein (272 aa).

Residues Ala-193–Leu-250 are disordered. Positions Asp-215–Asp-233 are enriched in low complexity. Residues Asn-235–Asn-248 show a composition bias toward polar residues.

This sequence belongs to the pal1 family.

The protein resides in the cytoplasm. The protein localises to the nucleus. This is an uncharacterized protein from Schizosaccharomyces pombe (strain 972 / ATCC 24843) (Fission yeast).